The sequence spans 170 residues: Small ribosomal subunit protein uS5 (170 aa).

Residues 13–76 (LTEKLIGVNR…DQARRSMVKI (64 aa)) enclose the S5 DRBM domain.

It belongs to the universal ribosomal protein uS5 family. As to quaternary structure, part of the 30S ribosomal subunit. Contacts proteins S4 and S8.

With S4 and S12 plays an important role in translational accuracy. In terms of biological role, located at the back of the 30S subunit body where it stabilizes the conformation of the head with respect to the body. This Laribacter hongkongensis (strain HLHK9) protein is Small ribosomal subunit protein uS5.